A 196-amino-acid chain; its full sequence is ATP-dependent Clp protease proteolytic subunit (196 aa).

Serine 96 serves as the catalytic Nucleophile. Histidine 121 is an active-site residue.

It belongs to the peptidase S14 family. Fourteen ClpP subunits assemble into 2 heptameric rings which stack back to back to give a disk-like structure with a central cavity, resembling the structure of eukaryotic proteasomes.

It is found in the cytoplasm. It catalyses the reaction Hydrolysis of proteins to small peptides in the presence of ATP and magnesium. alpha-casein is the usual test substrate. In the absence of ATP, only oligopeptides shorter than five residues are hydrolyzed (such as succinyl-Leu-Tyr-|-NHMec, and Leu-Tyr-Leu-|-Tyr-Trp, in which cleavage of the -Tyr-|-Leu- and -Tyr-|-Trp bonds also occurs).. Functionally, cleaves peptides in various proteins in a process that requires ATP hydrolysis. Has a chymotrypsin-like activity. Plays a major role in the degradation of misfolded proteins. The sequence is that of ATP-dependent Clp protease proteolytic subunit from Streptococcus equi subsp. zooepidemicus (strain H70).